The chain runs to 322 residues: Peroxidase 66 (322 aa).

Positions 1–24 (MAFSKGLIFAMIFAVLAIVKPSEA) are cleaved as a signal peptide. 2 disulfides stabilise this stretch: Cys35–Cys114 and Cys68–Cys73. The active-site Proton acceptor is His66. Ca(2+)-binding residues include Asp67, Gly72, Asp74, and Ser76. Asn155 carries an N-linked (GlcNAc...) asparagine glycan. Residue Pro161 participates in substrate binding. A glycan (N-linked (GlcNAc...) asparagine) is linked at Asn166. Residue His191 coordinates heme b. Thr192 provides a ligand contact to Ca(2+). Cys198 and Cys230 are disulfide-bonded. The N-linked (GlcNAc...) asparagine glycan is linked to Asn207. Residues Asp245, Thr247, and Asp252 each coordinate Ca(2+).

The protein belongs to the peroxidase family. Classical plant (class III) peroxidase subfamily. It depends on heme b as a cofactor. The cofactor is Ca(2+).

Its subcellular location is the secreted. It carries out the reaction 2 a phenolic donor + H2O2 = 2 a phenolic radical donor + 2 H2O. Functionally, removal of H(2)O(2), oxidation of toxic reductants, biosynthesis and degradation of lignin, suberization, auxin catabolism, response to environmental stresses such as wounding, pathogen attack and oxidative stress. These functions might be dependent on each isozyme/isoform in each plant tissue. The chain is Peroxidase 66 (PER66) from Arabidopsis thaliana (Mouse-ear cress).